The sequence spans 273 residues: Formamidopyrimidine-DNA glycosylase (273 aa).

Pro-2 serves as the catalytic Schiff-base intermediate with DNA. Residue Glu-3 is the Proton donor of the active site. The active-site Proton donor; for beta-elimination activity is Lys-58. 3 residues coordinate DNA: His-92, Arg-111, and Lys-153. Residues 238-272 (KVYGREGQSCLSCSSTIIKIKHSGRSTFYCKTCQY) form an FPG-type zinc finger. Catalysis depends on Arg-262, which acts as the Proton donor; for delta-elimination activity.

This sequence belongs to the FPG family. As to quaternary structure, monomer. The cofactor is Zn(2+).

The enzyme catalyses Hydrolysis of DNA containing ring-opened 7-methylguanine residues, releasing 2,6-diamino-4-hydroxy-5-(N-methyl)formamidopyrimidine.. It carries out the reaction 2'-deoxyribonucleotide-(2'-deoxyribose 5'-phosphate)-2'-deoxyribonucleotide-DNA = a 3'-end 2'-deoxyribonucleotide-(2,3-dehydro-2,3-deoxyribose 5'-phosphate)-DNA + a 5'-end 5'-phospho-2'-deoxyribonucleoside-DNA + H(+). Involved in base excision repair of DNA damaged by oxidation or by mutagenic agents. Acts as a DNA glycosylase that recognizes and removes damaged bases. Has a preference for oxidized purines, such as 7,8-dihydro-8-oxoguanine (8-oxoG). Has AP (apurinic/apyrimidinic) lyase activity and introduces nicks in the DNA strand. Cleaves the DNA backbone by beta-delta elimination to generate a single-strand break at the site of the removed base with both 3'- and 5'-phosphates. In Rickettsia peacockii (strain Rustic), this protein is Formamidopyrimidine-DNA glycosylase.